We begin with the raw amino-acid sequence, 338 residues long: Lipoate-protein ligase A (338 aa).

The region spanning 29–216 is the BPL/LPL catalytic domain; sequence PATQRVLFLW…AFFAHYGERV (188 aa). ATP is bound by residues arginine 71, 76–79, and lysine 134; that span reads GAVF. (R)-lipoate is bound at residue lysine 134.

Belongs to the LplA family. In terms of assembly, monomer.

It localises to the cytoplasm. It catalyses the reaction L-lysyl-[lipoyl-carrier protein] + (R)-lipoate + ATP = N(6)-[(R)-lipoyl]-L-lysyl-[lipoyl-carrier protein] + AMP + diphosphate + H(+). It functions in the pathway protein modification; protein lipoylation via exogenous pathway; protein N(6)-(lipoyl)lysine from lipoate: step 1/2. Its pathway is protein modification; protein lipoylation via exogenous pathway; protein N(6)-(lipoyl)lysine from lipoate: step 2/2. Its function is as follows. Catalyzes both the ATP-dependent activation of exogenously supplied lipoate to lipoyl-AMP and the transfer of the activated lipoyl onto the lipoyl domains of lipoate-dependent enzymes. In Escherichia coli (strain K12 / MC4100 / BW2952), this protein is Lipoate-protein ligase A.